The following is a 374-amino-acid chain: UDP-N-acetylglucosamine--N-acetylmuramyl-(pentapeptide) pyrophosphoryl-undecaprenol N-acetylglucosamine transferase (374 aa).

Residues 13–15 (TGG), asparagine 124, arginine 165, serine 193, and glutamine 294 each bind UDP-N-acetyl-alpha-D-glucosamine.

Belongs to the glycosyltransferase 28 family. MurG subfamily.

It localises to the cell inner membrane. The enzyme catalyses di-trans,octa-cis-undecaprenyl diphospho-N-acetyl-alpha-D-muramoyl-L-alanyl-D-glutamyl-meso-2,6-diaminopimeloyl-D-alanyl-D-alanine + UDP-N-acetyl-alpha-D-glucosamine = di-trans,octa-cis-undecaprenyl diphospho-[N-acetyl-alpha-D-glucosaminyl-(1-&gt;4)]-N-acetyl-alpha-D-muramoyl-L-alanyl-D-glutamyl-meso-2,6-diaminopimeloyl-D-alanyl-D-alanine + UDP + H(+). Its pathway is cell wall biogenesis; peptidoglycan biosynthesis. Cell wall formation. Catalyzes the transfer of a GlcNAc subunit on undecaprenyl-pyrophosphoryl-MurNAc-pentapeptide (lipid intermediate I) to form undecaprenyl-pyrophosphoryl-MurNAc-(pentapeptide)GlcNAc (lipid intermediate II). The polypeptide is UDP-N-acetylglucosamine--N-acetylmuramyl-(pentapeptide) pyrophosphoryl-undecaprenol N-acetylglucosamine transferase (Rhizobium rhizogenes (strain K84 / ATCC BAA-868) (Agrobacterium radiobacter)).